A 285-amino-acid polypeptide reads, in one-letter code: Seipin (285 aa).

Residues 1–16 (MKINVSRPLQFLQWSS) lie on the Cytoplasmic side of the membrane. Residues 17–37 (YIVVAFLIQLLIILPLSILIY) traverse the membrane as a helical segment. Over 38-244 (HDFYLRLLPA…GLRNLMLRKR (207 aa)) the chain is Lumenal. Residues 245–265 (FLSYIIGISIFHCIICVLFFI) form a helical membrane-spanning segment. The Cytoplasmic portion of the chain corresponds to 266–285 (TGCTAFIFVRKGQEKSKKHS).

It belongs to the seipin family.

The protein localises to the endoplasmic reticulum membrane. Involved in lipid metabolism and lipid droplet (LD) morphology, number, and size. Facilitates initiation of LD formation, and ensures that vectorial budding of LDs from the ER is directed towards the cytoplasm. This is Seipin from Saccharomyces cerevisiae (strain ATCC 204508 / S288c) (Baker's yeast).